Reading from the N-terminus, the 501-residue chain is Dynein regulatory complex subunit 5 (501 aa).

The span at 1–23 (MQDTVTTSALLDPSHSSVSTQDN) shows a compositional bias: polar residues. 2 disordered regions span residues 1-56 (MQDT…HPRA) and 202-222 (LPAQLRPGDQSDSGSEGEMEE). The span at 24–34 (SSTGGHTSSTS) shows a compositional bias: low complexity. LRR repeat units follow at residues 308–321 (VLEELDLSQNLIGD), 335–355 (RLRVLNLANNQVRAPGAQSLA), 363–383 (NLISLNLRLNCIEDEGGQALA), 391–411 (CLTTLHLGGNELSEPTATLLS), and 419–439 (TLTSINLSCNHIGLDGGKQLL).

Belongs to the DRC5 family. In terms of assembly, component of the nexin-dynein regulatory complex (N-DRC). Interacts with DRC1. Interacts with FBXL13/DRC6, DRC3 and DRC7.

The protein localises to the cell projection. It localises to the cilium. The protein resides in the flagellum. Its subcellular location is the cytoplasm. It is found in the cytoskeleton. The protein localises to the flagellum axoneme. Its function is as follows. Component of the nexin-dynein regulatory complex (N-DRC) a key regulator of ciliary/flagellar motility which maintains the alignment and integrity of the distal axoneme and regulates microtubule sliding in motile axonemes. May play a role in the assembly of N-DRC. May be required for sperm motility. The chain is Dynein regulatory complex subunit 5 (TCTE1) from Homo sapiens (Human).